The following is a 70-amino-acid chain: Small ribosomal subunit protein bS21 (70 aa).

Belongs to the bacterial ribosomal protein bS21 family.

The chain is Small ribosomal subunit protein bS21 from Helicobacter pylori (strain P12).